Here is a 144-residue protein sequence, read N- to C-terminus: Large ribosomal subunit protein uL16 (144 aa).

Belongs to the universal ribosomal protein uL16 family. In terms of assembly, part of the 50S ribosomal subunit.

Functionally, binds 23S rRNA and is also seen to make contacts with the A and possibly P site tRNAs. The chain is Large ribosomal subunit protein uL16 from Bacillus cereus (strain ATCC 10987 / NRS 248).